The sequence spans 145 residues: Hemoglobin subunit beta (145 aa).

The 145-residue stretch at 1–145 (MLTAEEKAAV…VANALAHRYH (145 aa)) folds into the Globin domain. Thr11 is subject to Phosphothreonine. At Lys58 the chain carries N6-acetyllysine. Position 62 (His62) interacts with heme b. At Lys81 the chain carries N6-acetyllysine. His91 is a binding site for heme b. S-nitrosocysteine is present on Cys92.

Belongs to the globin family. In terms of assembly, heterotetramer of two alpha chains and two beta chains. Red blood cells.

Its function is as follows. Involved in oxygen transport from the lung to the various peripheral tissues. In Alces alces alces (European moose), this protein is Hemoglobin subunit beta (HBB).